The following is a 116-amino-acid chain: Mercuric transport protein MerT (116 aa).

The next 2 helical transmembrane spans lie at 16-36 (LAAI…ALGF) and 46-66 (VLEP…FFAW). Residues C24 and C25 each coordinate Hg(2+). Hg(2+)-binding residues include C76 and C82. A helical transmembrane segment spans residues 94–114 (IFWGVAVLVLVALGFPYVVPF).

It belongs to the MerT family.

The protein localises to the cell inner membrane. Functionally, involved in mercury resistance. Probably transfers a mercuric ion from the periplasmic Hg(2+)-binding protein MerP to the cytoplasmic mercuric reductase MerA. The chain is Mercuric transport protein MerT from Pseudomonas fluorescens.